The chain runs to 658 residues: MKNNIKVILIGDEQVGKSTIINSFISESFSEITQKTLPEVTIPAEFNNEICSTRIIDTFDDGKNLKNQMNMEIRTADAIVIVYSVDRFDTFMSIRMKWIPLINQLRGSNKSPIIIVGNKLDLVDDKHENNKVQIEETIQYFRSTYSNTIQWLECSAKTMENLPELLYASQTSVFFPERILYNREENKMTEGCERALKRIFKLCDHDNDGSLSEEEINYFQTKCGHETMTSEEIQNIQQFVLSKIPDGVNSNGFTEKGFLYMNLLFLLRGPCQHTWTSLRSFNYDDDLVLLESYVHPTLQVPPNHNTILSSMGNEFFKSLFEKYDSDSDGVLSSFDLVSLFSTTPKIPWEIGFEKHFNTDKDSNLTLSGFLSLWNLQTYENYKVTLEYLAYFGSQTENNNIDMISILNSRELDIKSNQFTRNIVNCYVFGAEAVGKTTFLNTFIGKSFSTLYNATNGNDNFKVCGHLLKNKYLILSEYVGEKIPTAELKSKCDLVCLLYDCNSEQSFKFIENIYNQLKQQQLNIPIVFIRTKNNNNNNNNNNNNNNNNNNNNLNNNNNNINNNNNNNNNNTTTTNANVSTSKIIDSFFKSHKNYSPKDFSISRSNSIYHEMMETIVNSSFNDNSNGSNGSNNSNILTYLVIAAGVAGVGLLLSKYLAKK.

Residues 1–633 (MKNNIKVILI…NGSNGSNNSN (633 aa)) lie on the Cytoplasmic side of the membrane. The region spanning 2–175 (KNNIKVILIG…LYASQTSVFF (174 aa)) is the Miro 1 domain. Residues 11–18 (GDEQVGKS), 57–62 (DTFDDG), and 118–121 (NKLD) contribute to the GTP site. 2 EF-hand domains span residues 191–226 (GCER…CGHE) and 311–346 (MGNE…TPKI). Ca(2+) contacts are provided by Asp204, Asp206, Asp208, Ser210, Glu215, Asp324, Asp326, Asp328, and Asp335. The 197-residue stretch at 420 to 616 (RNIVNCYVFG…YHEMMETIVN (197 aa)) folds into the Miro 2 domain. Residues 429–436 (GAEAVGKT), 466–468 (LLK), and 530–533 (TKNN) contribute to the GTP site. Residues 532–575 (NNNNNNNNNNNNNNNNNNNNLNNNNNNINNNNNNNNNNTTTTNA) form a disordered region. A helical; Anchor for type IV membrane protein transmembrane segment spans residues 634 to 656 (ILTYLVIAAGVAGVGLLLSKYLA). Topologically, residues 657–658 (KK) are mitochondrial intermembrane.

Belongs to the mitochondrial Rho GTPase family.

The protein localises to the mitochondrion outer membrane. Its function is as follows. Mitochondrial GTPase involved in mitochondrial trafficking. Probably involved in control of anterograde transport of mitochondria and their subcellular distribution. This chain is Probable mitochondrial Rho GTPase gemA (gemA), found in Dictyostelium discoideum (Social amoeba).